Consider the following 261-residue polypeptide: Small ribosomal subunit protein uS2 (261 aa).

The protein belongs to the universal ribosomal protein uS2 family.

The chain is Small ribosomal subunit protein uS2 from Enterococcus faecalis (strain ATCC 700802 / V583).